The primary structure comprises 124 residues: RESPAMKFQRQHMDSGNSPGNNPNYCNQMMMRRKMTQGRCKPVNTFVHESLEDVKAVCSQKNVLCKNGRTNCYESNSTMHITDCRQTGSSKYPNCAYKTSQKEKHIIVACEGNPYVPVHFDNSV.

Positions 1–23 (RESPAMKFQRQHMDSGNSPGNNP) are disordered. Substrate contacts are provided by lysine 7 and arginine 10. The active-site Proton acceptor is the histidine 12. The segment covering 14 to 23 (DSGNSPGNNP) has biased composition (polar residues). Disulfide bonds link cysteine 26/cysteine 84, cysteine 40/cysteine 95, cysteine 58/cysteine 110, and cysteine 65/cysteine 72. Substrate is bound by residues 41–45 (KPVNT) and lysine 66. Residue asparagine 76 is glycosylated (N-linked (GlcNAc...) asparagine; partial). Arginine 85 provides a ligand contact to substrate. The active-site Proton donor is the histidine 119.

It belongs to the pancreatic ribonuclease family. As to quaternary structure, monomer. Interacts with and forms tight 1:1 complexes with RNH1. Dimerization of two such complexes may occur. Interaction with RNH1 inhibits this protein. Pancreas.

It is found in the secreted. It carries out the reaction an [RNA] containing cytidine + H2O = an [RNA]-3'-cytidine-3'-phosphate + a 5'-hydroxy-ribonucleotide-3'-[RNA].. The catalysed reaction is an [RNA] containing uridine + H2O = an [RNA]-3'-uridine-3'-phosphate + a 5'-hydroxy-ribonucleotide-3'-[RNA].. Its function is as follows. Endonuclease that catalyzes the cleavage of RNA on the 3' side of pyrimidine nucleotides. Acts on single-stranded and double-stranded RNA. This chain is Ribonuclease pancreatic (RNASE1), found in Balaenoptera acutorostrata (Common minke whale).